The primary structure comprises 202 residues: Na(+)-translocating NADH-quinone reductase subunit E (202 aa).

Transmembrane regions (helical) follow at residues 11–31 (AVFI…FLAV), 35–55 (VTTS…SVPV), 81–101 (FLRF…LEMA), 114–134 (GIFL…SFMV), 144–164 (VVYG…LAGI), and 180–200 (LGIT…FSGI).

It belongs to the NqrDE/RnfAE family. As to quaternary structure, composed of six subunits; NqrA, NqrB, NqrC, NqrD, NqrE and NqrF.

It localises to the cell inner membrane. It carries out the reaction a ubiquinone + n Na(+)(in) + NADH + H(+) = a ubiquinol + n Na(+)(out) + NAD(+). NQR complex catalyzes the reduction of ubiquinone-1 to ubiquinol by two successive reactions, coupled with the transport of Na(+) ions from the cytoplasm to the periplasm. NqrA to NqrE are probably involved in the second step, the conversion of ubisemiquinone to ubiquinol. The chain is Na(+)-translocating NADH-quinone reductase subunit E from Pseudoalteromonas translucida (strain TAC 125).